Reading from the N-terminus, the 492-residue chain is Glutamyl-tRNA(Gln) amidotransferase subunit A (492 aa).

Catalysis depends on charge relay system residues Lys78 and Ser158. Residue Ser182 is the Acyl-ester intermediate of the active site.

Belongs to the amidase family. GatA subfamily. In terms of assembly, heterotrimer of A, B and C subunits.

It catalyses the reaction L-glutamyl-tRNA(Gln) + L-glutamine + ATP + H2O = L-glutaminyl-tRNA(Gln) + L-glutamate + ADP + phosphate + H(+). Allows the formation of correctly charged Gln-tRNA(Gln) through the transamidation of misacylated Glu-tRNA(Gln) in organisms which lack glutaminyl-tRNA synthetase. The reaction takes place in the presence of glutamine and ATP through an activated gamma-phospho-Glu-tRNA(Gln). This Parvibaculum lavamentivorans (strain DS-1 / DSM 13023 / NCIMB 13966) protein is Glutamyl-tRNA(Gln) amidotransferase subunit A.